The primary structure comprises 204 residues: Ribosomal RNA small subunit methyltransferase G (204 aa).

S-adenosyl-L-methionine is bound by residues G76, L81, 127–128 (IE), and R140.

The protein belongs to the methyltransferase superfamily. RNA methyltransferase RsmG family.

Its subcellular location is the cytoplasm. The catalysed reaction is guanosine(527) in 16S rRNA + S-adenosyl-L-methionine = N(7)-methylguanosine(527) in 16S rRNA + S-adenosyl-L-homocysteine. Specifically methylates the N7 position of guanine in position 527 of 16S rRNA. The polypeptide is Ribosomal RNA small subunit methyltransferase G (Francisella philomiragia subsp. philomiragia (strain ATCC 25017 / CCUG 19701 / FSC 153 / O#319-036)).